Here is a 528-residue protein sequence, read N- to C-terminus: Esterase PE16 (528 aa).

The PE domain maps to 1–93; the sequence is MSFVFAVPEM…AGWYVDAEAA (93 aa). The segment at 94-143 is linker; that stretch reads NAALVDTAATGASELGSGGRTALILGSTGTPRPPFDYMQQVYDRYIAPHY. In terms of domain architecture, PE-PPE spans 149 to 369; that stretch reads SGLYTPAQFQ…LRAIIELGYD (221 aa). Ser-199 is a catalytic residue. Residues 503–523 traverse the membrane as a helical segment; sequence IALLVFAAGIPAVAAVAILTG.

The protein belongs to the mycobacterial PE family.

It localises to the membrane. The enzyme catalyses a hexanoate ester + H2O = an aliphatic alcohol + hexanoate + H(+). It carries out the reaction an octanoate ester + H2O = an aliphatic alcohol + octanoate + H(+). The catalysed reaction is a butanoate ester + H2O = an aliphatic alcohol + butanoate + H(+). Esterase activity is significantly inhibited by the serine modifier phenylmethylsulfonyl fluoride (PMSF). In terms of biological role, esterase that hydrolyzes short to medium chain fatty acid esters with the highest specific activity for p-nitrophenyl caproate (pNPC6). Has lower activity with p-nitrophenyl caprylate (pNPC8) and p-nitrophenyl butyrate (pNPC4). Has weak activity with p-nitrophenyl caprate (pNPC10) and p-nitrophenyl laurate (pNPC12). Does not possess lipolytic activity and cutinase activity. This Mycobacterium tuberculosis (strain ATCC 25618 / H37Rv) protein is Esterase PE16.